Consider the following 86-residue polypeptide: Mu-theraphotoxin-Hhn1b 3 (86 aa).

An N-terminal signal peptide occupies residues 1–21; the sequence is MKASMFLALTGLALLFVVCYA. A propeptide spanning residues 22-49 is cleaved from the precursor; sequence SESEEKEFSNELLSSVLAVDDNSKGEER. 3 disulfides stabilise this stretch: C51-C66, C58-C73, and C65-C80. I84 is modified (isoleucine amide).

Belongs to the neurotoxin 10 (Hwtx-1) family. 22 (Htx-4) subfamily. In terms of assembly, monomer. Expressed by the venom gland.

Its subcellular location is the secreted. Neurotoxin. Selectively blocks neuronal tetrodotoxin-sensitive voltage-gated sodium channels (Nav) with an IC(50) of 44.6 nM. Does not affect tetrodotoxin-resistant voltage-gated sodium channels or calcium channels. This chain is Mu-theraphotoxin-Hhn1b 3, found in Cyriopagopus hainanus (Chinese bird spider).